We begin with the raw amino-acid sequence, 384 residues long: Mannitol-1-phosphate 5-dehydrogenase (384 aa).

Alanine 3–glycine 14 is an NAD(+) binding site.

Belongs to the mannitol dehydrogenase family.

It catalyses the reaction D-mannitol 1-phosphate + NAD(+) = beta-D-fructose 6-phosphate + NADH + H(+). The polypeptide is Mannitol-1-phosphate 5-dehydrogenase (mtlD) (Clostridium acetobutylicum (strain ATCC 824 / DSM 792 / JCM 1419 / IAM 19013 / LMG 5710 / NBRC 13948 / NRRL B-527 / VKM B-1787 / 2291 / W)).